The chain runs to 213 residues: dITP/XTP pyrophosphatase (213 aa).

Residue 17 to 22 (SNNAGK) coordinates substrate. Asp78 serves as the catalytic Proton acceptor. Position 78 (Asp78) interacts with Mg(2+). Residues Ser79, 164–167 (FGYD), Lys187, and 192–193 (HR) each bind substrate.

This sequence belongs to the HAM1 NTPase family. As to quaternary structure, homodimer. It depends on Mg(2+) as a cofactor.

The catalysed reaction is XTP + H2O = XMP + diphosphate + H(+). The enzyme catalyses dITP + H2O = dIMP + diphosphate + H(+). It carries out the reaction ITP + H2O = IMP + diphosphate + H(+). Pyrophosphatase that catalyzes the hydrolysis of nucleoside triphosphates to their monophosphate derivatives, with a high preference for the non-canonical purine nucleotides XTP (xanthosine triphosphate), dITP (deoxyinosine triphosphate) and ITP. Seems to function as a house-cleaning enzyme that removes non-canonical purine nucleotides from the nucleotide pool, thus preventing their incorporation into DNA/RNA and avoiding chromosomal lesions. The chain is dITP/XTP pyrophosphatase from Bordetella parapertussis (strain 12822 / ATCC BAA-587 / NCTC 13253).